The primary structure comprises 700 residues: Glutamine synthetase (700 aa).

Residues Y65–G155 form the GS beta-grasp domain. The GS catalytic domain maps to D159–L589. E196, E198, E267, and E274 together coordinate Mg(2+). Residues N318 to G319 and G319 contribute to the L-glutamate site. Mg(2+) is bound at residue H323. S327 and R435 together coordinate ATP. R435 contributes to the L-glutamate binding site. E472 is a binding site for Mg(2+).

The protein belongs to the glutamine synthetase family. In terms of assembly, homohexamer. Mg(2+) is required as a cofactor.

It is found in the cytoplasm. It carries out the reaction L-glutamate + NH4(+) + ATP = L-glutamine + ADP + phosphate + H(+). Its activity is regulated as follows. The activity of this enzyme is not controlled by adenylation. Functionally, catalyzes the ATP-dependent biosynthesis of glutamine from glutamate and ammonia. This chain is Glutamine synthetase, found in Butyrivibrio fibrisolvens.